Reading from the N-terminus, the 699-residue chain is Polyribonucleotide nucleotidyltransferase (699 aa).

The Mg(2+) site is built by D488 and D494. In terms of domain architecture, KH spans 555–614 (PRIYSIKVNPDKIKDVIGKGGSVIRSLTEETNTIIDIEDNGIIKIVALDYDKAKQAIRRI). The region spanning 624 to 692 (GAVYTGKVSH…RQGRIRLSMK (69 aa)) is the S1 motif domain.

It belongs to the polyribonucleotide nucleotidyltransferase family. In terms of assembly, component of the RNA degradosome, which is a multiprotein complex involved in RNA processing and mRNA degradation. The cofactor is Mg(2+).

Its subcellular location is the cytoplasm. The enzyme catalyses RNA(n+1) + phosphate = RNA(n) + a ribonucleoside 5'-diphosphate. Functionally, involved in mRNA degradation. Catalyzes the phosphorolysis of single-stranded polyribonucleotides processively in the 3'- to 5'-direction. This is Polyribonucleotide nucleotidyltransferase from Blochmanniella pennsylvanica (strain BPEN).